We begin with the raw amino-acid sequence, 505 residues long: UDP-N-acetylmuramate--L-alanine ligase (505 aa).

164–170 (GTHGKTT) is a binding site for ATP.

This sequence belongs to the MurCDEF family.

Its subcellular location is the cytoplasm. It carries out the reaction UDP-N-acetyl-alpha-D-muramate + L-alanine + ATP = UDP-N-acetyl-alpha-D-muramoyl-L-alanine + ADP + phosphate + H(+). It functions in the pathway cell wall biogenesis; peptidoglycan biosynthesis. Its function is as follows. Cell wall formation. In Synechocystis sp. (strain ATCC 27184 / PCC 6803 / Kazusa), this protein is UDP-N-acetylmuramate--L-alanine ligase.